Reading from the N-terminus, the 283-residue chain is Lipoyl synthase (283 aa).

Residues Cys35, Cys40, Cys46, Cys61, Cys65, Cys68, and Ser273 each coordinate [4Fe-4S] cluster. The Radical SAM core domain maps to 47–262; that stretch reads FRSRQATFLI…RERALAMGFK (216 aa).

The protein belongs to the radical SAM superfamily. Lipoyl synthase family. Requires [4Fe-4S] cluster as cofactor.

It localises to the cytoplasm. It catalyses the reaction [[Fe-S] cluster scaffold protein carrying a second [4Fe-4S](2+) cluster] + N(6)-octanoyl-L-lysyl-[protein] + 2 oxidized [2Fe-2S]-[ferredoxin] + 2 S-adenosyl-L-methionine + 4 H(+) = [[Fe-S] cluster scaffold protein] + N(6)-[(R)-dihydrolipoyl]-L-lysyl-[protein] + 4 Fe(3+) + 2 hydrogen sulfide + 2 5'-deoxyadenosine + 2 L-methionine + 2 reduced [2Fe-2S]-[ferredoxin]. Its pathway is protein modification; protein lipoylation via endogenous pathway; protein N(6)-(lipoyl)lysine from octanoyl-[acyl-carrier-protein]: step 2/2. Functionally, catalyzes the radical-mediated insertion of two sulfur atoms into the C-6 and C-8 positions of the octanoyl moiety bound to the lipoyl domains of lipoate-dependent enzymes, thereby converting the octanoylated domains into lipoylated derivatives. This Geotalea uraniireducens (strain Rf4) (Geobacter uraniireducens) protein is Lipoyl synthase.